Reading from the N-terminus, the 737-residue chain is Protein penguin (737 aa).

The tract at residues Met-1–Lys-128 is disordered. Basic and acidic residues-rich tracts occupy residues Lys-76 to Leu-89 and Glu-107 to Asp-122. Residues Glu-139 to Ile-490 enclose the PUM-HD domain. Pumilio repeat units lie at residues Asn-167–Glu-202, Lys-203–Asp-238, Ser-239–Gln-274, Asn-388–Asp-425, and His-426–Arg-462. The tract at residues Val-577–Ser-638 is disordered. The segment covering Ser-580–Glu-600 has biased composition (acidic residues). The segment covering Lys-601–Val-615 has biased composition (basic and acidic residues). Residues Lys-616–Lys-626 show a composition bias toward basic residues.

The chain is Protein penguin from Drosophila melanogaster (Fruit fly).